The primary structure comprises 382 residues: MQIPFSSSSSTSLGIEWELQLVDQQSRELRGEASGILHELRAKVGECEAAKAKHELFESTIEVITGVCDSVEEATADLSGTVSLLRDLAERRGIGLMCSGTHPASDYMGQRITEDHRYFRLVSQMQWLARRLLIFGVHVHVGVRSADKAMPIVNALMAYVPHFLALSASSPYWLGGDTGLASSRSQVFASLPTAGLPYPLEDWPGFESFMETLIVSGTIETIREVWWDIRPHPNFGTVELRVCDGLPSLMEVGAVAALAQCLVDRMNTQIDRGYRLPTPQRWLVQENKWRAARYGLDAQIIVDGRGGIRPVRDDITDLVEDLLPVAHRLGCSSELSDTLTILRTGASYIRQRDAARRAGGDLTRVVDTLLEEMNTGRPVVDG.

It belongs to the glutamate--cysteine ligase type 2 family. YbdK subfamily.

It carries out the reaction L-cysteine + L-glutamate + ATP = gamma-L-glutamyl-L-cysteine + ADP + phosphate + H(+). Its function is as follows. ATP-dependent carboxylate-amine ligase which exhibits weak glutamate--cysteine ligase activity. The protein is Putative glutamate--cysteine ligase 2-1 of Frankia casuarinae (strain DSM 45818 / CECT 9043 / HFP020203 / CcI3).